The primary structure comprises 129 residues: Small ribosomal subunit protein uS13 (129 aa).

The span at 95–114 (NLPVRGQRTKTNARTRRGPR) shows a compositional bias: basic residues. The tract at residues 95–129 (NLPVRGQRTKTNARTRRGPRKTVAGRGQKRGATKK) is disordered.

Belongs to the universal ribosomal protein uS13 family. Part of the 30S ribosomal subunit. Forms a loose heterodimer with protein S19. Forms two bridges to the 50S subunit in the 70S ribosome.

Located at the top of the head of the 30S subunit, it contacts several helices of the 16S rRNA. In the 70S ribosome it contacts the 23S rRNA (bridge B1a) and protein L5 of the 50S subunit (bridge B1b), connecting the 2 subunits; these bridges are implicated in subunit movement. Contacts the tRNAs in the A and P-sites. This Dehalococcoides mccartyi (strain ATCC BAA-2100 / JCM 16839 / KCTC 5957 / BAV1) protein is Small ribosomal subunit protein uS13.